The chain runs to 415 residues: Serine hydroxymethyltransferase (415 aa).

Residues leucine 117 and 121 to 123 contribute to the (6S)-5,6,7,8-tetrahydrofolate site; that span reads GHL. The residue at position 226 (lysine 226) is an N6-(pyridoxal phosphate)lysine.

The protein belongs to the SHMT family. In terms of assembly, homodimer. It depends on pyridoxal 5'-phosphate as a cofactor.

Its subcellular location is the cytoplasm. It catalyses the reaction (6R)-5,10-methylene-5,6,7,8-tetrahydrofolate + glycine + H2O = (6S)-5,6,7,8-tetrahydrofolate + L-serine. The protein operates within one-carbon metabolism; tetrahydrofolate interconversion. It functions in the pathway amino-acid biosynthesis; glycine biosynthesis; glycine from L-serine: step 1/1. Catalyzes the reversible interconversion of serine and glycine with tetrahydrofolate (THF) serving as the one-carbon carrier. This reaction serves as the major source of one-carbon groups required for the biosynthesis of purines, thymidylate, methionine, and other important biomolecules. Also exhibits THF-independent aldolase activity toward beta-hydroxyamino acids, producing glycine and aldehydes, via a retro-aldol mechanism. This is Serine hydroxymethyltransferase from Leptospira borgpetersenii serovar Hardjo-bovis (strain JB197).